The following is a 1166-amino-acid chain: DEAD-box ATP-dependent RNA helicase 42 (1166 aa).

2 stretches are compositionally biased toward basic and acidic residues: residues 1 to 12 and 21 to 45; these read MEVEKSKYRSED and DLKK…EKRR. The disordered stretch occupies residues 1 to 460; sequence MEVEKSKYRS…NDDDPSLDED (460 aa). The stretch at 14–95 forms a coiled coil; the sequence is DVVEEEADLK…KDRVKRRSER (82 aa). The span at 59–70 shows a compositional bias: acidic residues; it reads SEDDYDRDDDEE. Over residues 80 to 95 the composition is skewed to basic residues; the sequence is ERRRRDKDRVKRRSER. Over residues 101–110 the composition is skewed to acidic residues; that stretch reads SEDDVEEEDE. A compositionally biased stretch (basic and acidic residues) spans 111-206; the sequence is RDKRRVNEKE…RERERSREVG (96 aa). The stretch at 130 to 302 forms a coiled coil; sequence RGKDRKRDRE…KRKKEEAESE (173 aa). Serine 210 carries the phosphoserine modification. Residues 224-314 are compositionally biased toward basic and acidic residues; sequence EGGERKEKER…GDADGNEPKA (91 aa). At serine 324 the chain carries Phosphoserine. Basic and acidic residues-rich tracts occupy residues 344 to 357 and 416 to 426; these read ETKP…KMVD and MNGKESGDRPK. Positions 529 to 557 match the Q motif motif; it reads KFWHQTGLTSKILDTMKKLNYEKPMPIQT. Residues 560 to 738 enclose the Helicase ATP-binding domain; it reads LPIIMSGRDC…RKVLNKPVEI (179 aa). 573–580 is a binding site for ATP; sequence AKTGSGKT. The short motif at 686-689 is the DEAD box element; sequence DEAD. The Helicase C-terminal domain maps to 749–910; it reads DITQLVEVRP…PVPDDLKALA (162 aa).

It belongs to the DEAD box helicase family. DDX46/PRP5 subfamily.

The protein resides in the nucleus. The enzyme catalyses ATP + H2O = ADP + phosphate + H(+). In terms of biological role, helicase required for pre-mRNA splicing, cold-responsive gene regulation and cold tolerance. The sequence is that of DEAD-box ATP-dependent RNA helicase 42 (RH42) from Arabidopsis thaliana (Mouse-ear cress).